A 158-amino-acid polypeptide reads, in one-letter code: Small ribosomal subunit protein uS19 (158 aa).

This sequence belongs to the universal ribosomal protein uS19 family.

Its function is as follows. Protein S19 forms a complex with S13 that binds strongly to the 16S ribosomal RNA. The polypeptide is Small ribosomal subunit protein uS19 (Pyrobaculum calidifontis (strain DSM 21063 / JCM 11548 / VA1)).